A 344-amino-acid chain; its full sequence is MAQLIFDEEKVTSVIDRIVKRTFQMDFAWDWPGGVAFYGVAEAYEATENEEYINLLKTWVDEQLEDGLPPLSINGVSIGHTLLFLHKVTGDDVYLETAAEMAEYVLHKAPRFGEGILQHTVNAAEYVFPEQAWADTLMMAGLFMLRIGRVMEREDYFEDGLRQFHGHEDVLQDPVTNLYYHAWDNKAQNHLSGIYWGRANGWAALTMAKALPLIEVTHPSFMIIDGSLRDQLSALVRLQDESGLWHTILDDPDSYLEVSASAGIASALMSSGKLYTKYVQKSLAAILDAVEEDGRVSRVSAGTAVMKNAEGYKQVPYKRIQGWGQGLALTFLADVLKTKKRLYQ.

Residues 30 to 31 (DW), Asn74, and 118 to 128 (QHTVNAAEYVF) contribute to the substrate site. Asp135 acts as the Proton donor in catalysis. Residues 198–202 (RANGW) and 308–309 (NA) each bind substrate.

It belongs to the glycosyl hydrolase 105 family. As to quaternary structure, monomer.

It is found in the cytoplasm. The enzyme catalyses 2-O-(4-deoxy-beta-L-threo-hex-4-enopyranuronosyl)-alpha-L-rhamnose + H2O = 5-dehydro-4-deoxy-D-glucuronate + L-rhamnopyranose. Its function is as follows. Catalyzes the hydrolysis of unsaturated rhamnogalacturonan disaccharide to yield unsaturated D-galacturonic acid and L-rhamnose. It cannot act on unsaturated glucuronyl hydrolase (UGL) substrates containing unsaturated D-glucuronic acid at the non-reducing terminus, although the active pockets of YesR and UGL are very similar. The protein is Unsaturated rhamnogalacturonyl hydrolase YesR (yesR) of Bacillus subtilis (strain 168).